A 198-amino-acid chain; its full sequence is Recombination protein RecR (198 aa).

A C4-type zinc finger spans residues 57-72; the sequence is CSVCGNITDEDPCEIC. Residues 80-175 enclose the Toprim domain; the sequence is EMILVVEQPK…KVTRLAHGLA (96 aa).

Belongs to the RecR family.

In terms of biological role, may play a role in DNA repair. It seems to be involved in an RecBC-independent recombinational process of DNA repair. It may act with RecF and RecO. This Latilactobacillus sakei subsp. sakei (strain 23K) (Lactobacillus sakei subsp. sakei) protein is Recombination protein RecR.